A 191-amino-acid chain; its full sequence is Programmed cell death protein 6 (191 aa).

At Ala-2 the chain carries N-acetylalanine. EF-hand domains lie at 23–58 (PDQS…GTWT), 59–89 (PFNP…TGVW), 90–125 (KYIT…FGYR), 126–161 (LSDQ…LQRL), and 162–191 (TDIF…FSIV). Ca(2+) is bound by residues Asp-36, Asp-38, Ser-40, Val-42, and Glu-47. Asp-103, Asp-105, Ser-107, Met-109, and Glu-114 together coordinate Ca(2+). Residues Asp-169, Asp-171, Asp-173, and Trp-175 each coordinate Mg(2+).

As to quaternary structure, homodimer and heterodimer; heterodimerizes (via the EF-hand 5) with PEF1. Isoform 1 and isoform 2 self-associate; probably forming homodimers. Interacts with CPNE4 (via VWFA domain). Interacts with PDCD6IP; the interaction is calcium-dependent. Interacts with RBM22. Interacts with PLSCR4. Interacts with ANXA7 and TSG101. Interacts with DAPK1. Interacts with SEC31A; the interaction is calcium-dependent and promotes monoubiquitination of SEC31A. Interacts with ANXA11 (via N-terminus); the interaction is calcium-dependent. Interacts with PLSCR3 (via N-terminus); the interaction is calcium-dependent. Interacts with MCOLN1; the interaction is calcium-dependent. Interacts with KDR; the interaction is calcium-dependent. Interacts with HEBP2; the interaction is calcium-dependent. Interacts with TFG. Isoform 1: Interacts with SHISA5, leading to stabilize it. Isoform 2: Does not interact with SHISA5. Isoform 2: Does not interact with PDCD6IP, TSG101, ANXA7 and ANXA11.

It is found in the endoplasmic reticulum membrane. It localises to the cytoplasmic vesicle. The protein localises to the COPII-coated vesicle membrane. Its subcellular location is the cytoplasm. The protein resides in the nucleus. It is found in the endosome. Calcium sensor that plays a key role in processes such as endoplasmic reticulum (ER)-Golgi vesicular transport, endosomal biogenesis or membrane repair. Acts as an adapter that bridges unrelated proteins or stabilizes weak protein-protein complexes in response to calcium: calcium-binding triggers exposure of apolar surface, promoting interaction with different sets of proteins thanks to 3 different hydrophobic pockets, leading to translocation to membranes. Involved in ER-Golgi transport. Regulates ER-Golgi transport by promoting the association between PDCD6IP and TSG101, thereby bridging together the ESCRT-III and ESCRT-I complexes. Together with PEF1, acts as a calcium-dependent adapter for the BCR(KLHL12) complex, a complex involved in ER-Golgi transport by regulating the size of COPII coats. In response to cytosolic calcium increase, the heterodimer formed with PEF1 interacts with, and bridges together the BCR(KLHL12) complex and SEC31 (SEC31A or SEC31B), promoting monoubiquitination of SEC31 and subsequent collagen export, which is required for neural crest specification. Involved in the regulation of the distribution and function of MCOLN1 in the endosomal pathway. Promotes localization and polymerization of TFG at endoplasmic reticulum exit site. Required for T-cell receptor-, Fas-, and glucocorticoid-induced apoptosis. May mediate Ca(2+)-regulated signals along the death pathway: interaction with DAPK1 can accelerate apoptotic cell death by increasing caspase-3 activity. Its role in apoptosis may however be indirect, as suggested by knockout experiments. May inhibit KDR/VEGFR2-dependent angiogenesis; the function involves inhibition of VEGF-induced phosphorylation of the Akt signaling pathway. Functionally, has a lower Ca(2+) affinity than isoform 1. The polypeptide is Programmed cell death protein 6 (Rattus norvegicus (Rat)).